Consider the following 349-residue polypeptide: MSNSLVISVDAMGGDDAPDMVVDGVKLARKRFPDVRFLLFGDEARIGPLVAGDSALSAVCTIRHTASAVSGDAKPSQAVRSGRQSSLWLSIEAVKKGEAAGVVSAGNTGAFMAMAKLILRTLPGIDRPAIATLLPTLRGESVVLDLGANAECNANNLVEFAIMGEVFARTVLSLDRPTVGIMNIGSESGKGTDTVRDASARLQDSALPIRFMGFVEGDDLGKGTVDVIVTDGFTGNVMLKTAEGTAKLYSQFLRNAFLSSLLARLGYLLSRSALQKVKARTDPRRYNGAMFLGLDGVAVKSHGGTDALGFSNALAVAIDLVRQGFNESIKDEIAKVQVLPSTVSVSHAV.

It belongs to the PlsX family. In terms of assembly, homodimer. Probably interacts with PlsY.

It localises to the cytoplasm. The catalysed reaction is a fatty acyl-[ACP] + phosphate = an acyl phosphate + holo-[ACP]. The protein operates within lipid metabolism; phospholipid metabolism. Catalyzes the reversible formation of acyl-phosphate (acyl-PO(4)) from acyl-[acyl-carrier-protein] (acyl-ACP). This enzyme utilizes acyl-ACP as fatty acyl donor, but not acyl-CoA. This chain is Phosphate acyltransferase, found in Rhodospirillum rubrum (strain ATCC 11170 / ATH 1.1.1 / DSM 467 / LMG 4362 / NCIMB 8255 / S1).